The following is a 549-amino-acid chain: Glucose-6-phosphate isomerase (549 aa).

The active-site Proton donor is Glu355. Catalysis depends on residues His386 and Lys514.

The protein belongs to the GPI family.

Its subcellular location is the cytoplasm. It carries out the reaction alpha-D-glucose 6-phosphate = beta-D-fructose 6-phosphate. It participates in carbohydrate biosynthesis; gluconeogenesis. The protein operates within carbohydrate degradation; glycolysis; D-glyceraldehyde 3-phosphate and glycerone phosphate from D-glucose: step 2/4. In terms of biological role, catalyzes the reversible isomerization of glucose-6-phosphate to fructose-6-phosphate. The polypeptide is Glucose-6-phosphate isomerase (Salmonella paratyphi C (strain RKS4594)).